The primary structure comprises 603 residues: UvrABC system protein C (603 aa).

The region spanning 13-92 (NGPGVYLMKD…IRKHKPRYNI (80 aa)) is the GIY-YIG domain. The UVR domain occupies 202–237 (NDLLQKIKEQMAAASERQEYELAARLRDRMFAIQAT).

This sequence belongs to the UvrC family. Interacts with UvrB in an incision complex.

The protein localises to the cytoplasm. In terms of biological role, the UvrABC repair system catalyzes the recognition and processing of DNA lesions. UvrC both incises the 5' and 3' sides of the lesion. The N-terminal half is responsible for the 3' incision and the C-terminal half is responsible for the 5' incision. The sequence is that of UvrABC system protein C from Desulfatibacillum aliphaticivorans.